Consider the following 158-residue polypeptide: Ribosome maturation factor RimP (158 aa).

Belongs to the RimP family.

It is found in the cytoplasm. Functionally, required for maturation of 30S ribosomal subunits. The protein is Ribosome maturation factor RimP of Pseudomonas savastanoi pv. phaseolicola (strain 1448A / Race 6) (Pseudomonas syringae pv. phaseolicola (strain 1448A / Race 6)).